A 527-amino-acid chain; its full sequence is Protein Lilipod (527 aa).

At 1 to 22 the chain is on the extracellular side; it reads MDEEEEEEVTDLKLQLFHNTVR. A helical transmembrane segment spans residues 23-43; the sequence is EHIIFLLLIILLYSSSYVVVS. Over 44-65 the chain is Cytoplasmic; the sequence is RFRRRDRDDLYSNDEDEVLVYR. Residues 66–86 traverse the membrane as a helical segment; the sequence is ISFWLCTFTLAVAEGAAMLLP. Residues 87-117 lie on the Extracellular side of the membrane; it reads VSIASNEVLLLYPNSYYVKWLNSSLIQGLWN. The chain crosses the membrane as a helical span at residues 118–138; it reads HVFLFSNLSLFIFLPFVYLFS. Topologically, residues 139–160 are cytoplasmic; that stretch reads ESTGFVGNKKGILPRVYETFTV. A helical membrane pass occupies residues 161-181; sequence FMLMAIIVLVLTAVLSAVFGI. Topologically, residues 182 to 194 are extracellular; that stretch reads EKLQFFWFLNLGS. Residues 195–215 form a helical membrane-spanning segment; it reads VHLPFLYSCVSFLGVMLMLIC. Over 216–341 the chain is Cytoplasmic; that stretch reads TPYGFVRLFG…LRTSSTFQRT (126 aa). The helical transmembrane segment at 342 to 362 threads the bilayer; that stretch reads FVYPLAMLLLLFCTAVTILLV. Residues 363–395 lie on the Extracellular side of the membrane; that stretch reads VQNTLELLIGIKALPLSTRQFALGISSLSKLGP. A helical membrane pass occupies residues 396–416; the sequence is FGAGLEVCLIFYLGATSVVGF. Residues 417 to 433 are Cytoplasmic-facing; it reads YSMPFMRKVCPKRRQTS. A helical transmembrane segment spans residues 434 to 454; sequence LPQLMLNCGFMLVLSSALPLL. The Extracellular segment spans residues 455 to 468; sequence SRIIGITNFDLLGD. Residues 469 to 489 form a helical membrane-spanning segment; sequence FGAIEWLGNFQIVLLYNLVFG. At 490 to 527 the chain is on the cytoplasmic side; sequence TTTALCLANKFTATVRRELRARLVENYVLFTNYISFIN.

Belongs to the LIMR family. As to expression, in the ovary, detected in germline stem cells and their progeny. Also detected in the somatic follicular epithelium.

It localises to the cell membrane. In terms of biological role, required during oogenesis to promote self-renewal of germline stem cells, probably by enhancing BMP signaling activity. This Drosophila melanogaster (Fruit fly) protein is Protein Lilipod.